The following is a 203-amino-acid chain: Twist-related protein 1 (203 aa).

A compositionally biased stretch (low complexity) spans Met-1 to Ser-18. The interval Met-1–Leu-107 is disordered. Residues Arg-34 to Arg-43 show a composition bias toward basic residues. 2 stretches are compositionally biased toward gly residues: residues Ala-46–Glu-65 and Gly-80–Ser-100. The bHLH domain occupies Thr-109–Leu-160. A sufficient for transactivation activity region spans residues Arg-162–Arg-192.

As to quaternary structure, efficient DNA binding requires dimerization with another bHLH protein. Homodimer or heterodimer with E proteins such as TCF3. ID1 binds preferentially to TCF3 but does not interact efficiently with TWIST1 so ID1 levels control the amount of TCF3 available to dimerize with TWIST and thus determine the type of dimer formed.

The protein localises to the nucleus. Its function is as follows. Acts as a transcriptional regulator. Inhibits myogenesis by sequestrating E proteins, inhibiting trans-activation by MEF2, and inhibiting DNA-binding by MYOD1 through physical interaction. This interaction probably involves the basic domains of both proteins. Also represses expression of pro-inflammatory cytokines such as TNFA and IL1B. Regulates cranial suture patterning and fusion. Activates transcription as a heterodimer with E proteins. Regulates gene expression differentially, depending on dimer composition. Homodimers induce expression of FGFR2 and POSTN while heterodimers repress FGFR2 and POSTN expression and induce THBS1 expression. Heterodimerization is also required for osteoblast differentiation. Represses the activity of the circadian transcriptional activator: NPAS2-BMAL1 heterodimer. In Gorilla gorilla gorilla (Western lowland gorilla), this protein is Twist-related protein 1 (TWIST1).